The primary structure comprises 518 residues: UPF0288 protein Mbar_A0706 (518 aa).

Belongs to the UPF0288 family.

This Methanosarcina barkeri (strain Fusaro / DSM 804) protein is UPF0288 protein Mbar_A0706.